A 562-amino-acid chain; its full sequence is Nicotinate phosphoribosyltransferase (562 aa).

Nicotinate contacts are provided by Y36, F183, and T225. At H228 the chain carries Phosphohistidine. Position 397 (T397) interacts with 5-phospho-alpha-D-ribose 1-diphosphate.

Belongs to the NAPRTase family. Mg(2+) is required as a cofactor. Mn(2+) serves as cofactor. In terms of processing, transiently phosphorylated on a His residue during the reaction cycle. Phosphorylation strongly increases the affinity for substrates and increases the rate of nicotinate D-ribonucleotide production. Dephosphorylation regenerates the low-affinity form of the enzyme, leading to product release.

The enzyme catalyses nicotinate + 5-phospho-alpha-D-ribose 1-diphosphate + ATP + H2O = nicotinate beta-D-ribonucleotide + ADP + phosphate + diphosphate. It participates in cofactor biosynthesis; NAD(+) biosynthesis; nicotinate D-ribonucleotide from nicotinate: step 1/1. In terms of biological role, catalyzes the first step in the biosynthesis of NAD from nicotinic acid, the ATP-dependent synthesis of beta-nicotinate D-ribonucleotide from nicotinate and 5-phospho-D-ribose 1-phosphate. Helps prevent cellular oxidative stress via its role in NAD biosynthesis. The protein is Nicotinate phosphoribosyltransferase of Caenorhabditis elegans.